A 490-amino-acid chain; its full sequence is Cytochrome P450 2C19 (490 aa).

Cys435 provides a ligand contact to heme.

Belongs to the cytochrome P450 family. Heme serves as cofactor.

The protein localises to the endoplasmic reticulum membrane. It localises to the microsome membrane. The catalysed reaction is an organic molecule + reduced [NADPH--hemoprotein reductase] + O2 = an alcohol + oxidized [NADPH--hemoprotein reductase] + H2O + H(+). It carries out the reaction (5Z,8Z,11Z)-eicosatrienoate + reduced [NADPH--hemoprotein reductase] + O2 = 19-hydroxy-(5Z,8Z,11Z)-eicosatrienoate + oxidized [NADPH--hemoprotein reductase] + H2O + H(+). It catalyses the reaction (5Z,8Z,11Z,14Z)-eicosatetraenoate + reduced [NADPH--hemoprotein reductase] + O2 = 19-hydroxy-(5Z,8Z,11Z,14Z)-eicosatetraenoate + oxidized [NADPH--hemoprotein reductase] + H2O + H(+). The enzyme catalyses (5Z,8Z,11Z,14Z,17Z)-eicosapentaenoate + reduced [NADPH--hemoprotein reductase] + O2 = 19-hydroxy-(5Z,8Z,11Z,14Z,17Z)-eicosapentaenoate + oxidized [NADPH--hemoprotein reductase] + H2O + H(+). The catalysed reaction is (4Z,7Z,10Z,13Z,16Z,19Z)-docosahexaenoate + reduced [NADPH--hemoprotein reductase] + O2 = 21-hydroxy-(4Z,7Z,10Z,13Z,16Z,19Z)-docosahexaenoate + oxidized [NADPH--hemoprotein reductase] + H2O + H(+). It carries out the reaction (5Z,8Z,11Z,14Z)-eicosatetraenoate + reduced [NADPH--hemoprotein reductase] + O2 = (8R,9S)-epoxy-(5Z,11Z,14Z)-eicosatrienoate + oxidized [NADPH--hemoprotein reductase] + H2O + H(+). It catalyses the reaction (5Z,8Z,11Z,14Z)-eicosatetraenoate + reduced [NADPH--hemoprotein reductase] + O2 = (11R,12S)-epoxy-(5Z,8Z,14Z)-eicosatrienoate + oxidized [NADPH--hemoprotein reductase] + H2O + H(+). The enzyme catalyses (5Z,8Z,11Z,14Z)-eicosatetraenoate + reduced [NADPH--hemoprotein reductase] + O2 = (11S,12R)-epoxy-(5Z,8Z,14Z)-eicosatrienoate + oxidized [NADPH--hemoprotein reductase] + H2O + H(+). The catalysed reaction is (5Z,8Z,11Z,14Z)-eicosatetraenoate + reduced [NADPH--hemoprotein reductase] + O2 = (14R,15S)-epoxy-(5Z,8Z,11Z)-eicosatrienoate + oxidized [NADPH--hemoprotein reductase] + H2O + H(+). It carries out the reaction (5Z,8Z,11Z,14Z,17Z)-eicosapentaenoate + reduced [NADPH--hemoprotein reductase] + O2 = (17R,18S)-epoxy-(5Z,8Z,11Z,14Z)-eicosatetraenoate + oxidized [NADPH--hemoprotein reductase] + H2O + H(+). It catalyses the reaction (4Z,7Z,10Z,13Z,16Z,19Z)-docosahexaenoate + reduced [NADPH--hemoprotein reductase] + O2 = (19R,20S)-epoxy-(4Z,7Z,10Z,13Z,16Z)-docosapentaenoate + oxidized [NADPH--hemoprotein reductase] + H2O + H(+). The enzyme catalyses (4Z,7Z,10Z,13Z,16Z,19Z)-docosahexaenoate + reduced [NADPH--hemoprotein reductase] + O2 = (19S,20R)-epoxy-(4Z,7Z,10Z,13Z,16Z)-docosapentaenoate + oxidized [NADPH--hemoprotein reductase] + H2O + H(+). The catalysed reaction is (4R)-limonene + reduced [NADPH--hemoprotein reductase] + O2 = (1R,5S)-carveol + oxidized [NADPH--hemoprotein reductase] + H2O + H(+). It carries out the reaction (4S)-limonene + reduced [NADPH--hemoprotein reductase] + O2 = (1S,5R)-carveol + oxidized [NADPH--hemoprotein reductase] + H2O + H(+). It catalyses the reaction (4S)-limonene + reduced [NADPH--hemoprotein reductase] + O2 = (4S)-perillyl alcohol + oxidized [NADPH--hemoprotein reductase] + H2O + H(+). The enzyme catalyses fenbendazole + reduced [NADPH--hemoprotein reductase] + O2 = 4'-hydroxyfenbendazole + oxidized [NADPH--hemoprotein reductase] + H2O + H(+). Its pathway is lipid metabolism; fatty acid metabolism. It functions in the pathway terpene metabolism; (4R)-limonene degradation. Functionally, a cytochrome P450 monooxygenase involved in the metabolism of polyunsaturated fatty acids (PUFA). Mechanistically, uses molecular oxygen inserting one oxygen atom into a substrate, and reducing the second into a water molecule, with two electrons provided by NADPH via cytochrome P450 reductase (NADPH--hemoprotein reductase). Catalyzes the hydroxylation of carbon-hydrogen bonds. Hydroxylates PUFA specifically at the omega-1 position. Catalyzes the epoxidation of double bonds of PUFA. Also metabolizes plant monoterpenes such as limonene. Oxygenates (R)- and (S)-limonene to produce carveol and perillyl alcohol. Responsible for the metabolism of a number of therapeutic agents such as the anticonvulsant drug S-mephenytoin, omeprazole, proguanil, certain barbiturates, diazepam, propranolol, citalopram and imipramine. Hydroxylates fenbendazole at the 4' position. The sequence is that of Cytochrome P450 2C19 (CYP2C19) from Homo sapiens (Human).